Here is a 108-residue protein sequence, read N- to C-terminus: Abscisic stress-ripening protein 3 (108 aa).

Disordered stretches follow at residues 1 to 34 and 84 to 108; these read MAEE…HHSH and FAFH…GRHH. The segment covering 15–24 has biased composition (basic and acidic residues); it reads NREEEGGPVD. The segment covering 25 to 34 has biased composition (basic residues); it reads HKKKVKHHSH. The span at 95–108 shows a compositional bias: basic and acidic residues; the sequence is AKKEKKAAEKGRHH.

This sequence belongs to the abscisic acid and water stress-induced protein family.

In Solanum lycopersicum (Tomato), this protein is Abscisic stress-ripening protein 3.